The following is a 404-amino-acid chain: Probable tRNA sulfurtransferase (404 aa).

The THUMP domain maps to 60 to 165; the sequence is QPVAESLKQI…EEAAYISYET (106 aa). ATP contacts are provided by residues 183-184, 208-209, Arg265, Gly287, and Gln296; these read ML and HF.

The protein belongs to the ThiI family.

The protein resides in the cytoplasm. The catalysed reaction is [ThiI sulfur-carrier protein]-S-sulfanyl-L-cysteine + a uridine in tRNA + 2 reduced [2Fe-2S]-[ferredoxin] + ATP + H(+) = [ThiI sulfur-carrier protein]-L-cysteine + a 4-thiouridine in tRNA + 2 oxidized [2Fe-2S]-[ferredoxin] + AMP + diphosphate. It catalyses the reaction [ThiS sulfur-carrier protein]-C-terminal Gly-Gly-AMP + S-sulfanyl-L-cysteinyl-[cysteine desulfurase] + AH2 = [ThiS sulfur-carrier protein]-C-terminal-Gly-aminoethanethioate + L-cysteinyl-[cysteine desulfurase] + A + AMP + 2 H(+). It participates in cofactor biosynthesis; thiamine diphosphate biosynthesis. Functionally, catalyzes the ATP-dependent transfer of a sulfur to tRNA to produce 4-thiouridine in position 8 of tRNAs, which functions as a near-UV photosensor. Also catalyzes the transfer of sulfur to the sulfur carrier protein ThiS, forming ThiS-thiocarboxylate. This is a step in the synthesis of thiazole, in the thiamine biosynthesis pathway. The sulfur is donated as persulfide by IscS. This is Probable tRNA sulfurtransferase from Streptococcus sanguinis (strain SK36).